Reading from the N-terminus, the 695-residue chain is Scarecrow-like protein 31 (695 aa).

2 disordered regions span residues 105–136 and 234–260; these read VISD…NSSN and ISKT…RSKQ. Over residues 113 to 136 the composition is skewed to low complexity; sequence SSIPNNSITTSSSSNSGDYSNSSN. The stretch at 233-266 forms a coiled coil; it reads AISKTRKNHHEREEEEDDLEEARRRSKQFAVNEE. A GRAS domain is found at 306–693; that stretch reads AKKKSRAVDF…RILFSSSCWV (388 aa). The interval 313 to 377 is leucine repeat I (LRI); sequence VDFRTLLTLC…EGSTGTMIQS (65 aa). The segment at 396-461 is VHIID; that stretch reads YSVFLSASPF…PGLRKLRITG (66 aa). A VHIID motif is present at residues 427-431; the sequence is LHIVD. Positions 477–509 are leucine repeat II (LRII); that stretch reads DTGRRLTEYCKRFGVPFEYNAIASKNWETIKME. Residues 519-614 form a PFYRE region; the sequence is LAVNAVLRFK…GEFYGREVMN (96 aa). The interval 617 to 693 is SAW; the sequence is ACEGVDRVER…RILFSSSCWV (77 aa).

Belongs to the GRAS family. Expressed in seedlings, roots, cotyledons, leaves and sepals.

The protein resides in the nucleus. Functionally, probable transcription factor involved in plant development. The protein is Scarecrow-like protein 31 (SCL31) of Arabidopsis thaliana (Mouse-ear cress).